The primary structure comprises 341 residues: Anthranilate phosphoribosyltransferase (341 aa).

Residues glycine 79, 82–83, threonine 87, 89–92, 107–115, and serine 119 each bind 5-phospho-alpha-D-ribose 1-diphosphate; these read GD, NIST, and KHGNRAATS. Anthranilate is bound at residue glycine 79. Serine 91 lines the Mg(2+) pocket. Asparagine 110 provides a ligand contact to anthranilate. Position 165 (arginine 165) interacts with anthranilate. Mg(2+)-binding residues include aspartate 224 and glutamate 225.

It belongs to the anthranilate phosphoribosyltransferase family. As to quaternary structure, homodimer. Requires Mg(2+) as cofactor.

It catalyses the reaction N-(5-phospho-beta-D-ribosyl)anthranilate + diphosphate = 5-phospho-alpha-D-ribose 1-diphosphate + anthranilate. Its pathway is amino-acid biosynthesis; L-tryptophan biosynthesis; L-tryptophan from chorismate: step 2/5. In terms of biological role, catalyzes the transfer of the phosphoribosyl group of 5-phosphorylribose-1-pyrophosphate (PRPP) to anthranilate to yield N-(5'-phosphoribosyl)-anthranilate (PRA). The sequence is that of Anthranilate phosphoribosyltransferase from Symbiobacterium thermophilum (strain DSM 24528 / JCM 14929 / IAM 14863 / T).